Here is a 459-residue protein sequence, read N- to C-terminus: Mitochondrial distribution and morphology protein 34 (459 aa).

Residues 1–190 (MSFRFNEAVF…LPSLIFNTSQ (190 aa)) form the SMP-LTD domain. Residues 338 to 347 (RSNSNDDNAK) are compositionally biased toward basic and acidic residues. Positions 338–375 (RSNSNDDNAKPRRRKIKCKKTRTPSNLQSQGEQAVDDS) are disordered. The segment covering 348-359 (PRRRKIKCKKTR) has biased composition (basic residues).

This sequence belongs to the MDM34 family. In terms of assembly, component of the ER-mitochondria encounter structure (ERMES) or MDM complex, composed of MMM1, MDM10, MDM12 and MDM34. Ubiquitinated by a SCF (SKP1-CUL1-F-box protein) E3 ubiquitin-protein ligase complex containing the F-box protein MDM30. Ubiquitination is important for mitochondrial integrity.

The protein localises to the mitochondrion outer membrane. Component of the ERMES/MDM complex, which serves as a molecular tether to connect the endoplasmic reticulum (ER) and mitochondria. Components of this complex are involved in the control of mitochondrial shape and protein biogenesis, and function in nonvesicular lipid trafficking between the ER and mitochondria. MDM34 is required for the interaction of the ER-resident membrane protein MMM1 and the outer mitochondrial membrane-resident beta-barrel protein MDM10. This Saccharomyces cerevisiae (strain YJM789) (Baker's yeast) protein is Mitochondrial distribution and morphology protein 34.